Here is a 309-residue protein sequence, read N- to C-terminus: Homoserine O-succinyltransferase (309 aa).

The active-site Acyl-thioester intermediate is the cysteine 142. Lysine 163 and serine 192 together coordinate substrate. The active-site Proton acceptor is histidine 235. Glutamate 237 is a catalytic residue. Arginine 249 provides a ligand contact to substrate.

Belongs to the MetA family. As to quaternary structure, homodimer.

Its subcellular location is the cytoplasm. It catalyses the reaction L-homoserine + succinyl-CoA = O-succinyl-L-homoserine + CoA. The protein operates within amino-acid biosynthesis; L-methionine biosynthesis via de novo pathway; O-succinyl-L-homoserine from L-homoserine: step 1/1. In terms of biological role, transfers a succinyl group from succinyl-CoA to L-homoserine, forming succinyl-L-homoserine. In Escherichia coli O127:H6 (strain E2348/69 / EPEC), this protein is Homoserine O-succinyltransferase.